The sequence spans 814 residues: Exostosin-like-3 homolog (814 aa).

Residues Met1–Pro14 lie on the Cytoplasmic side of the membrane. The chain crosses the membrane as a helical; Signal-anchor for type II membrane protein span at residues Ser15 to Tyr35. N-linked (GlcNAc...) asparagine glycans are attached at residues Asn36, Asn227, Asn297, Asn322, Asn454, and Asn492. Residues Asn36 to Val814 lie on the Lumenal side of the membrane. Positions 570, 595, 620, 625, 641, 642, and 643 each coordinate UDP-N-acetyl-alpha-D-glucosamine. Residue Asp643 coordinates Mn(2+). A glycan (N-linked (GlcNAc...) asparagine) is linked at Asn685. An intrachain disulfide couples Cys726 to Cys774. UDP-N-acetyl-alpha-D-glucosamine contacts are provided by Glu727, Asp728, and Arg771. Asp728 is a catalytic residue.

Belongs to the glycosyltransferase 47 family. As to quaternary structure, interacts with rib-1. Requires Mn(2+) as cofactor.

It localises to the endoplasmic reticulum membrane. The protein resides in the golgi apparatus membrane. It catalyses the reaction 3-O-(beta-D-GlcA-(1-&gt;3)-beta-D-Gal-(1-&gt;3)-beta-D-Gal-(1-&gt;4)-beta-D-Xyl)-L-seryl-[protein] + UDP-N-acetyl-alpha-D-glucosamine = 3-O-(alpha-D-GlcNAc-(1-&gt;4)-beta-D-GlcA-(1-&gt;3)-beta-D-Gal-(1-&gt;3)-beta-D-Gal-(1-&gt;4)-beta-D-Xyl)-L-seryl-[protein] + UDP + H(+). The catalysed reaction is 3-O-{[(1-&gt;4)-beta-D-GlcA-(1-&gt;4)-alpha-D-GlcNAc](n)-(1-&gt;4)-beta-D-GlcA-(1-&gt;3)-beta-D-Gal-(1-&gt;3)-beta-D-Gal-(1-&gt;4)-beta-D-Xyl}-L-seryl-[protein] + UDP-N-acetyl-alpha-D-glucosamine = 3-O-{alpha-D-GlcNAc-[(1-&gt;4)-beta-D-GlcA-(1-&gt;4)-alpha-D-GlcNAc](n)-(1-&gt;4)-beta-D-GlcA-(1-&gt;3)-beta-D-Gal-(1-&gt;3)-beta-D-Gal-(1-&gt;4)-beta-D-Xyl}-L-seryl-[protein] + UDP + H(+). It carries out the reaction 3-O-{alpha-D-GlcNAc-[(1-&gt;4)-beta-D-GlcA-(1-&gt;4)-alpha-D-GlcNAc](n)-(1-&gt;4)-beta-D-GlcA-(1-&gt;3)-beta-D-Gal-(1-&gt;3)-beta-D-Gal-(1-&gt;4)-beta-D-Xyl}-L-seryl-[protein] + UDP-alpha-D-glucuronate = 3-O-{[(1-&gt;4)-beta-D-GlcA-(1-&gt;4)-alpha-D-GlcNAc](n+1)-(1-&gt;4)-beta-D-GlcA-(1-&gt;3)-beta-D-Gal-(1-&gt;3)-beta-D-Gal-(1-&gt;4)-beta-D-Xyl}-L-seryl-[protein] + UDP + H(+). Its pathway is glycan metabolism; heparan sulfate biosynthesis. Binding to rib-1 is required for GlcAT-II activity and for increasing GlcNAc-II activity in vitro. Glycosyltransferase required for the biosynthesis of heparan sulfate. Initiates heparan sulfate synthesis by transferring GlcNAc to the (GlcA-Gal-Gal-Xyl-)Ser core linker (GlcNAcT-I activity). In association with rib-1, is also responsible for the alternating addition of beta-1-4-linked glucuronic acid (GlcA) and alpha-1-4-linked N-acetylglucosamine (GlcNAc) units to nascent heparan sulfate chains (GlcNAcT-II and GlcAT-II activities). Required for normal ventral epidermal enclosure during the early stages of embryonic development. In addition, involved in the elongation of the pharyngeal isthmus during the later stages of embryonic development. Involved in the directed migration of hermaphrodite-specific neurons. The polypeptide is Exostosin-like-3 homolog (rib-2) (Caenorhabditis elegans).